Here is a 239-residue protein sequence, read N- to C-terminus: MTAPLSLFVTGTDTEIGKTFVSAAMLHGFARHGLRAAALKPVAAGAYQRDGVWRNEDADQLDAAANVVLPPELRTPFLLKAPAAPHIVAAQEGVTLDLDTIVACHREALTRADVVVVEGVGGFRVPLNDTQDTADLAVALGLPVVLVVGIRLGCISHALLTADAIRQRGLALAGWVANHVDPAMSFADENVATIRDWLAREHRAPLVGRIAHMTPAAPESAAAMLDIAALVESLRAARP.

15–20 is an ATP binding site; it reads EIGKTF. Thr19 contributes to the Mg(2+) binding site. Residue Lys40 is part of the active site. ATP is bound by residues Asp57, 118–121, and 178–179; these read EGVG and NH. Residues Asp57 and Glu118 each contribute to the Mg(2+) site.

Belongs to the dethiobiotin synthetase family. Homodimer. Mg(2+) is required as a cofactor.

Its subcellular location is the cytoplasm. It catalyses the reaction (7R,8S)-7,8-diammoniononanoate + CO2 + ATP = (4R,5S)-dethiobiotin + ADP + phosphate + 3 H(+). Its pathway is cofactor biosynthesis; biotin biosynthesis; biotin from 7,8-diaminononanoate: step 1/2. In terms of biological role, catalyzes a mechanistically unusual reaction, the ATP-dependent insertion of CO2 between the N7 and N8 nitrogen atoms of 7,8-diaminopelargonic acid (DAPA, also called 7,8-diammoniononanoate) to form a ureido ring. The chain is ATP-dependent dethiobiotin synthetase BioD from Burkholderia cenocepacia (strain ATCC BAA-245 / DSM 16553 / LMG 16656 / NCTC 13227 / J2315 / CF5610) (Burkholderia cepacia (strain J2315)).